Reading from the N-terminus, the 1055-residue chain is DIS3-like exonuclease 2 (1055 aa).

Disordered stretches follow at residues 1–109 (MKSA…SSPE) and 229–249 (SAAK…KARQ). Positions 17–32 (HKKKRNRPQKQNRRSK) are enriched in basic residues. Over residues 39 to 59 (EDAHVEESLDGRDSSRSKAKD) the composition is skewed to basic and acidic residues. Residues 97-108 (PRRSASPLLSSP) show a composition bias toward low complexity. 2 residues coordinate Mg(2+): D488 and D497.

The protein belongs to the RNR ribonuclease family. DIS3L2 subfamily. The cofactor is Mg(2+). Mn(2+) serves as cofactor. Widely expressed.

It localises to the cytoplasm. The protein resides in the P-body. In terms of biological role, 3'-5'-exoribonuclease that specifically recognizes RNAs polyuridylated at their 3' end and mediates their degradation. Component of an exosome-independent RNA degradation pathway that mediates degradation of cytoplasmic mRNAs that have been deadenylated and subsequently uridylated at their 3'. In Arabidopsis thaliana (Mouse-ear cress), this protein is DIS3-like exonuclease 2 (SOV).